A 366-amino-acid chain; its full sequence is uncharacterized protein (366 aa).

A run of 6 helical transmembrane segments spans residues 30–50 (FWTY…AVGI), 66–86 (IIIA…IIVI), 136–156 (IFIS…GYLA), 162–182 (IILF…LDLL), 198–218 (IGVV…IYDI), and 225–245 (YIPE…IIDV).

The protein localises to the cell membrane. This is an uncharacterized protein from Methanocaldococcus jannaschii (strain ATCC 43067 / DSM 2661 / JAL-1 / JCM 10045 / NBRC 100440) (Methanococcus jannaschii).